Reading from the N-terminus, the 415-residue chain is Homoserine O-succinyltransferase (415 aa).

Residues 1–26 (MTSPALTAASVTPSRNTTSPDTTSHR) show a composition bias toward polar residues. The interval 1-27 (MTSPALTAASVTPSRNTTSPDTTSHRP) is disordered. The 316-residue stretch at 71 to 386 (NAVLICHALN…HGHDAFLLED (316 aa)) folds into the AB hydrolase-1 domain. Ser-177 (nucleophile) is an active-site residue. Substrate is bound at residue Arg-247. Catalysis depends on residues Asp-346 and His-379. Substrate is bound at residue Asp-380.

It belongs to the AB hydrolase superfamily. MetX family. In terms of assembly, homodimer.

Its subcellular location is the cytoplasm. It carries out the reaction L-homoserine + succinyl-CoA = O-succinyl-L-homoserine + CoA. The protein operates within amino-acid biosynthesis; L-methionine biosynthesis via de novo pathway; O-succinyl-L-homoserine from L-homoserine: step 1/1. Functionally, transfers a succinyl group from succinyl-CoA to L-homoserine, forming succinyl-L-homoserine. This chain is Homoserine O-succinyltransferase, found in Bordetella avium (strain 197N).